The chain runs to 167 residues: SsrA-binding protein (167 aa).

Residues 137–167 (GKQSHDKRDAAKERDWQRDKQRVMRRHNRDA) are disordered. The segment covering 139 to 158 (QSHDKRDAAKERDWQRDKQR) has biased composition (basic and acidic residues).

This sequence belongs to the SmpB family.

The protein resides in the cytoplasm. Functionally, required for rescue of stalled ribosomes mediated by trans-translation. Binds to transfer-messenger RNA (tmRNA), required for stable association of tmRNA with ribosomes. tmRNA and SmpB together mimic tRNA shape, replacing the anticodon stem-loop with SmpB. tmRNA is encoded by the ssrA gene; the 2 termini fold to resemble tRNA(Ala) and it encodes a 'tag peptide', a short internal open reading frame. During trans-translation Ala-aminoacylated tmRNA acts like a tRNA, entering the A-site of stalled ribosomes, displacing the stalled mRNA. The ribosome then switches to translate the ORF on the tmRNA; the nascent peptide is terminated with the 'tag peptide' encoded by the tmRNA and targeted for degradation. The ribosome is freed to recommence translation, which seems to be the essential function of trans-translation. This is SsrA-binding protein from Xanthomonas campestris pv. campestris (strain 8004).